The following is a 297-amino-acid chain: Probable endonuclease 4 (297 aa).

Zn(2+) is bound by residues H69, H110, E145, D179, H182, H214, D227, H229, and E259.

It belongs to the AP endonuclease 2 family. Requires Zn(2+) as cofactor.

The catalysed reaction is Endonucleolytic cleavage to 5'-phosphooligonucleotide end-products.. In terms of biological role, endonuclease IV plays a role in DNA repair. It cleaves phosphodiester bonds at apurinic or apyrimidinic (AP) sites, generating a 3'-hydroxyl group and a 5'-terminal sugar phosphate. The polypeptide is Probable endonuclease 4 (Listeria monocytogenes serovar 1/2a (strain ATCC BAA-679 / EGD-e)).